The chain runs to 91 residues: MTKGTQSFGMRHNKSHTICRRCGKRSFHIQKSTCACCGYPAAKTRSYNWGAKAKRRRTTGTGRMSYLKKVHRSFKNGFRSGKPAAAVAASA.

Residues cysteine 19, cysteine 22, cysteine 34, and cysteine 37 each contribute to the Zn(2+) site. The C4-type zinc-finger motif lies at 19–37 (CRRCGKRSFHIQKSTCACC).

It belongs to the eukaryotic ribosomal protein eL37 family. Component of the large ribosomal subunit (LSU). Mature yeast ribosomes consist of a small (40S) and a large (60S) subunit. The 40S small subunit contains 1 molecule of ribosomal RNA (18S rRNA) and at least 33 different proteins. The large 60S subunit contains 3 rRNA molecules (25S, 5.8S and 5S rRNA) and at least 46 different proteins. Zn(2+) is required as a cofactor.

Its subcellular location is the cytoplasm. Its function is as follows. Component of the ribosome, a large ribonucleoprotein complex responsible for the synthesis of proteins in the cell. The small ribosomal subunit (SSU) binds messenger RNAs (mRNAs) and translates the encoded message by selecting cognate aminoacyl-transfer RNA (tRNA) molecules. The large subunit (LSU) contains the ribosomal catalytic site termed the peptidyl transferase center (PTC), which catalyzes the formation of peptide bonds, thereby polymerizing the amino acids delivered by tRNAs into a polypeptide chain. The nascent polypeptides leave the ribosome through a tunnel in the LSU and interact with protein factors that function in enzymatic processing, targeting, and the membrane insertion of nascent chains at the exit of the ribosomal tunnel. In Schizosaccharomyces pombe (strain 972 / ATCC 24843) (Fission yeast), this protein is Large ribosomal subunit protein eL37B (rpl3702).